Here is a 429-residue protein sequence, read N- to C-terminus: 3-phosphoshikimate 1-carboxyvinyltransferase (429 aa).

3-phosphoshikimate-binding residues include Lys-23, Ser-24, and Arg-28. Lys-23 contacts phosphoenolpyruvate. Positions 95 and 123 each coordinate phosphoenolpyruvate. 3-phosphoshikimate is bound by residues Ser-168, Gln-170, Asp-316, and Lys-343. Gln-170 is a binding site for phosphoenolpyruvate. The Proton acceptor role is filled by Asp-316. Residues Arg-347 and Arg-389 each coordinate phosphoenolpyruvate.

This sequence belongs to the EPSP synthase family. In terms of assembly, monomer.

It localises to the cytoplasm. It carries out the reaction 3-phosphoshikimate + phosphoenolpyruvate = 5-O-(1-carboxyvinyl)-3-phosphoshikimate + phosphate. Its pathway is metabolic intermediate biosynthesis; chorismate biosynthesis; chorismate from D-erythrose 4-phosphate and phosphoenolpyruvate: step 6/7. In terms of biological role, catalyzes the transfer of the enolpyruvyl moiety of phosphoenolpyruvate (PEP) to the 5-hydroxyl of shikimate-3-phosphate (S3P) to produce enolpyruvyl shikimate-3-phosphate and inorganic phosphate. The chain is 3-phosphoshikimate 1-carboxyvinyltransferase from Bacillus cereus (strain 03BB102).